A 550-amino-acid polypeptide reads, in one-letter code: uncharacterized protein (550 aa).

The signal sequence occupies residues 1–13; that stretch reads MAGALFEPSFAAA. The disordered stretch occupies residues 312–358; it reads DAQPDPHLSGDEPPSRPLTPETTLFEALTPDPEPDPPATHAPAELIT.

It to M.tuberculosis Rv3776.

This is an uncharacterized protein from Mycobacterium tuberculosis (strain CDC 1551 / Oshkosh).